The chain runs to 428 residues: F-box/LRR-repeat protein 3 (428 aa).

Basic and acidic residues predominate over residues 1-21; the sequence is MKRGGRDSDRNSSEEGTAEKS. Residues 1 to 27 form a disordered region; that stretch reads MKRGGRDSDRNSSEEGTAEKSKKLRTT. Residues 34–81 enclose the F-box domain; that stretch reads CDWGNLLQDIILQVFKYLPLLDRAHASQVCRNWNQVFHMPDLWRCFEF. LRR repeat units lie at residues 119–146, 181–207, 208–233, 234–259, 316–341, 343–368, and 369–394; these read SSKE…GLIS, DTPV…KMSS, CPHV…ALNY, HLLS…RIDV, GRSV…VVCA, GLRP…GLGE, and CEVS…SIME.

As to quaternary structure, part of the SCF (SKP1-CUL1-F-box) E3 ubiquitin-protein ligase complex SCF(FBXL3) composed of CUL1, SKP1, RBX1 and FBXL3. Interacts with CRY1 and CRY2 (phosphorylated). Interacts with HDAC3. Interacts with KDM8. Post-translationally, undergoes autophagy-mediated degradation in the liver in a time-dependent manner. As to expression, widely expressed.

It localises to the nucleus. It is found in the cytoplasm. It functions in the pathway protein modification; protein ubiquitination. Functionally, substrate-recognition component of the SCF(FBXL3) E3 ubiquitin ligase complex involved in circadian rhythm function. Plays a key role in the maintenance of both the speed and the robustness of the circadian clock oscillation. The SCF(FBXL3) complex mainly acts in the nucleus and mediates ubiquitination and subsequent degradation of CRY1 and CRY2. Activity of the SCF(FBXL3) complex is counteracted by the SCF(FBXL21) complex. The polypeptide is F-box/LRR-repeat protein 3 (FBXL3) (Homo sapiens (Human)).